The sequence spans 798 residues: Integrin beta-1 (798 aa).

The signal sequence occupies residues 1-20 (MNLQLIFWIGLISSVCCVFG). The Extracellular segment spans residues 21-728 (QADENRCLKA…ETPECPTGPD (708 aa)). Residues 26–76 (RCLKANAKSCGECIQAGPNCGWCTNSTFLQEGMPTSARCDDLEALKKKGCH) form the PSI domain. Intrachain disulfides connect cysteine 27/cysteine 45, cysteine 35/cysteine 464, cysteine 38/cysteine 64, cysteine 48/cysteine 75, cysteine 207/cysteine 213, cysteine 261/cysteine 301, cysteine 401/cysteine 415, cysteine 435/cysteine 462, cysteine 466/cysteine 486, cysteine 477/cysteine 489, cysteine 491/cysteine 500, cysteine 502/cysteine 533, cysteine 516/cysteine 531, cysteine 525/cysteine 536, cysteine 538/cysteine 553, cysteine 555/cysteine 576, cysteine 560/cysteine 574, cysteine 568/cysteine 579, cysteine 581/cysteine 590, cysteine 592/cysteine 615, cysteine 599/cysteine 613, cysteine 607/cysteine 618, cysteine 620/cysteine 630, cysteine 633/cysteine 636, cysteine 640/cysteine 691, cysteine 646/cysteine 665, cysteine 649/cysteine 661, and cysteine 699/cysteine 723. The N-linked (GlcNAc...) asparagine glycan is linked to asparagine 50. Positions 75 to 91 (CHPNDIENPRGSKDIKK) are enriched in basic and acidic residues. Residues 75 to 105 (CHPNDIENPRGSKDIKKNKNVTNRSKGTAEK) form a disordered region. 2 N-linked (GlcNAc...) asparagine glycosylation sites follow: asparagine 94 and asparagine 97. The 239-residue stretch at 140 to 378 (DYPIDLYYLM…QLIIDAYNSL (239 aa)) folds into the VWFA domain. Mg(2+) contacts are provided by serine 152 and serine 154. Serine 154, aspartate 157, aspartate 158, and glutamate 189 together coordinate Ca(2+). A CX3CL1-binding region spans residues 207–213 (CTNEQNC). Asparagine 212 carries an N-linked (GlcNAc...) asparagine glycan. Residues asparagine 244, aspartate 246, proline 248, and glutamate 249 each contribute to the Ca(2+) site. Glutamate 249 contributes to the Mg(2+) binding site. The N-linked (GlcNAc...) asparagine glycan is linked to asparagine 269. The tract at residues 295-314 (LPNDGQCHLENDVYTMSHYY) is CX3CL1-binding. Ca(2+) is bound at residue alanine 362. N-linked (GlcNAc...) asparagine glycans are attached at residues asparagine 363, asparagine 406, and asparagine 417. The interaction with TMEM182 stretch occupies residues 383-465 (ILENSKLPEG…IILQFICECE (83 aa)). I-EGF domains lie at 466-501 (CQGEGIPGSPKCHDGNGTFECGACRCNEGRVGRHCE), 502-554 (CSTD…KFCE), 555-591 (CDNFNCDRSNGLICGGNGVCKCRVCECNPNYTGSACD), and 592-631 (CSLDTTSCMAVNGQICNGRGVCECGACKCTDPKFQGPTCE). Asparagine 481 is a glycosylation site (N-linked (GlcNAc...) asparagine). N-linked (GlcNAc...) asparagine glycosylation is present at asparagine 520. The N-linked (GlcNAc...) asparagine glycan is linked to asparagine 584. A glycan (N-linked (GlcNAc...) asparagine) is linked at asparagine 669. The helical transmembrane segment at 729 to 749 (IIPIVAGVVAGIVLIGLALLL) threads the bilayer. Topologically, residues 750–798 (IWKLLMIIHDRREFAKFEKEKMNAKWDTGENPIYKSAVTTVVNPKYEGK) are cytoplasmic. The interval 762-767 (EFAKFE) is signal for sorting from recycling endosomes; interaction with ACAP1. Threonine 777 bears the Phosphothreonine mark. Tyrosine 783 is subject to Phosphotyrosine. Serine 785 carries the phosphoserine modification. Residues 785-792 (SAVTTVVN) are interaction with ITGB1BP1. Threonine 789 is subject to Phosphothreonine. An N6-acetyllysine; alternate modification is found at lysine 794. Lysine 794 is covalently cross-linked (Glycyl lysine isopeptide (Lys-Gly) (interchain with G-Cter in SUMO1); alternate).

It belongs to the integrin beta chain family. Interacts with seprase FAP (seprase); the interaction occurs at the cell surface of invadopodia membrane in a collagen-dependent manner. Heterodimer of an alpha and a beta subunit. Beta-1 associates with either alpha-1, alpha-2, alpha-3, alpha-4, alpha-5, alpha-6, alpha-7, alpha-8, alpha-9, alpha-10, alpha-11 or alpha-V. ITGA6:ITGB1 is found in a complex with CD9; interaction takes place in oocytes and is involved in sperm-egg fusion. Binds LGALS3BP and NMRK2, when associated with alpha-7, but not with alpha-5. Interacts with FLNB, FLNC and RANBP9. Interacts with KRT1 in the presence of RACK1 and SRC. Interacts with JAML; integrin alpha-4/beta-1 may regulate leukocyte to endothelial cells adhesion by controlling JAML homodimerization. Interacts with RAB21. Interacts (via the cytoplasmic region) with RAB25 (via the hypervariable C-terminal region). Interacts with MYO10. Interacts with ITGB1BP1 (via C-terminal region); the interaction is a prerequisite for focal adhesion disassembly. Interacts with TLN1; the interaction is prevented by competitive binding of ITGB1BP1. Interacts with ACAP1; required for ITGB1 recycling. Interacts with ASAP3. Interacts with FERMT2; the interaction is inhibited in presence of ITGB1BP1. Interacts with DAB2. Interacts with FGR and HCK. Interacts with EMP2; the interaction may be direct or indirect and ITGB1 has a heterodimer form. ITGA5:ITGB1 interacts with CCN3. ITGA4:ITGB1 is found in a ternary complex with CX3CR1 and CX3CL1. ITGA5:ITGB1 interacts with FBN1. ITGA5:ITGB1 interacts with IL1B. Interacts with MDK. ITGA4:ITGB1 interacts with MDK; this interaction mediates MDK-induced osteoblast cells migration through PXN phosphorylation. ITGA6:ITGB1 interacts with MDK; this interaction mediates MDK-induced neurite-outgrowth. ITGA5:ITGB1 interacts with ACE2. Interacts with TMEM182 and LAMB1. Interacts with tensin TNS3; TNS3 also interacts with PEAK1, thus acting as an adapter molecule to bridge the association of PEAK1 with ITGB1. Interacts with tensin TNS4; the interaction displaces tensin TNS3 from the ITGB1 cytoplasmic tail and promotes ITGB1 stability. Integrin ITGA9:ITGB1 interacts with SPP1/OPN (via N-terminus). Integrin ITGA9:ITGB1 interacts with TNC/TNFN3 (via the 3rd Fibronectin type-III domain). Integrins ITGA4:ITGB1 and ITGA9:ITGB1 interact with SVEP1 (via Sushi domain 21); thereby inhibit Ca(2+) intracellular signaling and as a result repress vasocontraction. ITGA4:ITGB1 and ITGA5:ITGB1 interacts with SELP. Interacts with CD248. ITGA5:ITGB1 interacts with IGFBP1. ITGA4:ITGB1 interacts with BCAM. Interacts with ADGRG6. As to quaternary structure, interacts with the C-terminal region of FLNC. Interacts with filamin FLNA isoform 3/VAR-1. In terms of assembly, interacts with ACE2. Interacts with alpha-7B in cardiomyocytes of adult heart and alpha-7A and alpha-7B in adult skeletal muscle. Interacts with filamin FLNA isoform 3/VAR-1.

The protein localises to the cell membrane. It localises to the cell projection. Its subcellular location is the invadopodium membrane. It is found in the ruffle membrane. The protein resides in the recycling endosome. The protein localises to the melanosome. It localises to the lamellipodium. Its subcellular location is the ruffle. It is found in the cell junction. The protein resides in the focal adhesion. The protein localises to the sarcolemma. In terms of biological role, integrins alpha-1/beta-1, alpha-2/beta-1, alpha-10/beta-1 and alpha-11/beta-1 are receptors for collagen. Integrins alpha-1/beta-1 and alpha-2/beta-2 recognize the proline-hydroxylated sequence G-F-P-G-E-R in collagen. Integrins alpha-2/beta-1, alpha-3/beta-1, alpha-4/beta-1, alpha-5/beta-1, alpha-8/beta-1, alpha-10/beta-1, alpha-11/beta-1 and alpha-V/beta-1 are receptors for fibronectin. Alpha-4/beta-1 recognizes one or more domains within the alternatively spliced CS-1 and CS-5 regions of fibronectin. Integrin alpha-5/beta-1 is a receptor for fibrinogen. Integrin alpha-1/beta-1, alpha-2/beta-1, alpha-6/beta-1 and alpha-7/beta-1 are receptors for lamimin. Integrin alpha-6/beta-1 (ITGA6:ITGB1) is present in oocytes and is involved in sperm-egg fusion. Integrin alpha-4/beta-1 is a receptor for VCAM1 and recognizes the sequence Q-I-D-S in VCAM1. Integrin alpha-9/beta-1 is a receptor for VCAM1, cytotactin and osteopontin. It recognizes the sequence A-E-I-D-G-I-E-L in cytotactin. Integrin alpha-3/beta-1 is a receptor for epiligrin, thrombospondin and CSPG4. Integrin alpha-3/beta-1 provides a docking site for FAP (seprase) at invadopodia plasma membranes in a collagen-dependent manner and hence may participate in the adhesion, formation of invadopodia and matrix degradation processes, promoting cell invasion. Alpha-3/beta-1 may mediate with LGALS3 the stimulation by CSPG4 of endothelial cells migration. Integrin alpha-V/beta-1 is a receptor for vitronectin. Beta-1 integrins recognize the sequence R-G-D in a wide array of ligands. When associated with alpha-7/beta-1 integrin, regulates cell adhesion and laminin matrix deposition. Involved in promoting endothelial cell motility and angiogenesis. Involved in osteoblast compaction through the fibronectin fibrillogenesis cell-mediated matrix assembly process and the formation of mineralized bone nodules. May be involved in up-regulation of the activity of kinases such as PKC via binding to KRT1. Together with KRT1 and RACK1, serves as a platform for SRC activation or inactivation. Plays a mechanistic adhesive role during telophase, required for the successful completion of cytokinesis. ITGA4:ITGB1 binds to fractalkine (CX3CL1) and may act as its coreceptor in CX3CR1-dependent fractalkine signaling. ITGA4:ITGB1 and ITGA5:ITGB1 bind to PLA2G2A via a site (site 2) which is distinct from the classical ligand-binding site (site 1) and this induces integrin conformational changes and enhanced ligand binding to site 1. ITGA5:ITGB1 acts as a receptor for fibrillin-1 (FBN1) and mediates R-G-D-dependent cell adhesion to FBN1. ITGA5:ITGB1 acts as a receptor for fibronectin FN1 and mediates R-G-D-dependent cell adhesion to FN1. ITGA5:ITGB1 is a receptor for IL1B and binding is essential for IL1B signaling. ITGA5:ITGB3 is a receptor for soluble CD40LG and is required for CD40/CD40LG signaling. Plays an important role in myoblast differentiation and fusion during skeletal myogenesis. ITGA9:ITGB1 may play a crucial role in SVEP1/polydom-mediated myoblast cell adhesion. Integrins ITGA9:ITGB1 and ITGA4:ITGB1 repress PRKCA-mediated L-type voltage-gated channel Ca(2+) influx and ROCK-mediated calcium sensitivity in vascular smooth muscle cells via their interaction with SVEP1, thereby inhibit vasocontraction. This is Integrin beta-1 (ITGB1) from Bos taurus (Bovine).